The sequence spans 351 residues: Phospho-N-acetylmuramoyl-pentapeptide-transferase (351 aa).

10 helical membrane-spanning segments follow: residues 17-37 (TAYATIFAFLLALIFGPFIIS), 61-83 (MGIPTMGGVLIFFCVLVSLFFWI), 88-105 (IYFLIVLFVMVSFACLGF), 130-150 (ILFSFISVVMLYYFGGEHVSI), 158-178 (SLKLDLGILYIPFGMFVLISA), 190-210 (GLAIGLSIVVIGALIIIAYLT), 230-250 (LVIFLGALLGGSFGFLWFNAY), 254-274 (IMMGDTGSLSIGAVLGMVALI), 279-299 (ILFAILAGVFVVETLSVIIQV), and 328-348 (QVVIRFWIIGLIFAILALSTI).

Belongs to the glycosyltransferase 4 family. MraY subfamily. Mg(2+) is required as a cofactor.

It localises to the cell inner membrane. The catalysed reaction is UDP-N-acetyl-alpha-D-muramoyl-L-alanyl-gamma-D-glutamyl-meso-2,6-diaminopimeloyl-D-alanyl-D-alanine + di-trans,octa-cis-undecaprenyl phosphate = di-trans,octa-cis-undecaprenyl diphospho-N-acetyl-alpha-D-muramoyl-L-alanyl-D-glutamyl-meso-2,6-diaminopimeloyl-D-alanyl-D-alanine + UMP. Its pathway is cell wall biogenesis; peptidoglycan biosynthesis. Its function is as follows. Catalyzes the initial step of the lipid cycle reactions in the biosynthesis of the cell wall peptidoglycan: transfers peptidoglycan precursor phospho-MurNAc-pentapeptide from UDP-MurNAc-pentapeptide onto the lipid carrier undecaprenyl phosphate, yielding undecaprenyl-pyrophosphoryl-MurNAc-pentapeptide, known as lipid I. This is Phospho-N-acetylmuramoyl-pentapeptide-transferase from Borrelia recurrentis (strain A1).